Reading from the N-terminus, the 177-residue chain is Protein GrpE (177 aa).

Residues 1–26 (MSEEIKKDDLQEEVEATETEETVEEV) form a disordered region. The segment covering 10 to 26 (LQEEVEATETEETVEEV) has biased composition (acidic residues).

It belongs to the GrpE family. In terms of assembly, homodimer.

It is found in the cytoplasm. Participates actively in the response to hyperosmotic and heat shock by preventing the aggregation of stress-denatured proteins, in association with DnaK and GrpE. It is the nucleotide exchange factor for DnaK and may function as a thermosensor. Unfolded proteins bind initially to DnaJ; upon interaction with the DnaJ-bound protein, DnaK hydrolyzes its bound ATP, resulting in the formation of a stable complex. GrpE releases ADP from DnaK; ATP binding to DnaK triggers the release of the substrate protein, thus completing the reaction cycle. Several rounds of ATP-dependent interactions between DnaJ, DnaK and GrpE are required for fully efficient folding. The polypeptide is Protein GrpE (Streptococcus agalactiae serotype Ia (strain ATCC 27591 / A909 / CDC SS700)).